Reading from the N-terminus, the 673-residue chain is Acetate--CoA ligase [ADP-forming] II (673 aa).

The 37-residue stretch at 9 to 45 (KALLEKYGIKTAKCIFCETEEQAVKAAKEIGFPVVMK) folds into the ATP-grasp domain. An ATP-binding site is contributed by 35–46 (AKEIGFPVVMKV).

It in the N-terminal section; belongs to the acetate CoA ligase beta subunit family. This sequence in the C-terminal section; belongs to the acetate CoA ligase alpha subunit family. As to quaternary structure, homodimer.

It catalyses the reaction acetate + ATP + CoA = acetyl-CoA + ADP + phosphate. Activity requires divalent metal cations. In terms of biological role, catalyzes the reversible conversion of a variety of acids to the corresponding acyl-CoA esters. Shows the highest activity with the aryl acids, indoleacetate and phenylacetate, as compared to acetate. In the reverse direction, phenylacetyl-CoA is the best substrate. Seems to be involved primarily in the degradation of aryl-CoA esters to the corresponding acids. Participates in the degradation of branched-chain amino acids via branched-chain-acyl-CoA esters. In Archaeoglobus fulgidus (strain ATCC 49558 / DSM 4304 / JCM 9628 / NBRC 100126 / VC-16), this protein is Acetate--CoA ligase [ADP-forming] II.